We begin with the raw amino-acid sequence, 151 residues long: Large ribosomal subunit protein uL13 (151 aa).

The tract at residues 129 to 151 (SNHPHQAQKPETLTINTIPGGNN) is disordered.

Belongs to the universal ribosomal protein uL13 family. As to quaternary structure, part of the 50S ribosomal subunit.

This protein is one of the early assembly proteins of the 50S ribosomal subunit, although it is not seen to bind rRNA by itself. It is important during the early stages of 50S assembly. The protein is Large ribosomal subunit protein uL13 of Gloeothece citriformis (strain PCC 7424) (Cyanothece sp. (strain PCC 7424)).